The following is a 460-amino-acid chain: Cysteine--tRNA ligase (460 aa).

Residue Cys28 participates in Zn(2+) binding. The 'HIGH' region signature appears at 30–40; sequence MTVYDYCHLGH. Zn(2+) is bound by residues Cys209, His234, and Glu238. Residues 266-270 carry the 'KMSKS' region motif; sequence KMSKS. Residue Lys269 participates in ATP binding.

This sequence belongs to the class-I aminoacyl-tRNA synthetase family. In terms of assembly, monomer. It depends on Zn(2+) as a cofactor.

The protein resides in the cytoplasm. The catalysed reaction is tRNA(Cys) + L-cysteine + ATP = L-cysteinyl-tRNA(Cys) + AMP + diphosphate. The chain is Cysteine--tRNA ligase from Pseudomonas fluorescens (strain Pf0-1).